A 425-amino-acid polypeptide reads, in one-letter code: Xyloglucan O-acetyltransferase 2 (425 aa).

At 1 to 18 (MGSPFKDHHTLHPSLVRK) the chain is on the cytoplasmic side. The chain crosses the membrane as a helical; Signal-anchor for type II membrane protein span at residues 19 to 38 (LIPWTFYAMVPLVLFRVYLY). Topologically, residues 39–425 (PYPLHHTTTT…KWEYASRREQ (387 aa)) are lumenal. Disulfide bonds link C68–C118, C89–C154, C98–C398, and C313–C394. An N-linked (GlcNAc...) asparagine glycan is attached at N85. The GDS motif signature appears at 141–143 (GDS). S143 acts as the Nucleophile in catalysis. N-linked (GlcNAc...) asparagine glycosylation is found at N183 and N259. D393 (proton donor) is an active-site residue. Positions 393–396 (DCVH) match the DXXH motif motif. H396 (proton acceptor) is an active-site residue.

This sequence belongs to the PC-esterase family. TBL subfamily.

The protein localises to the golgi apparatus membrane. In terms of biological role, xyloglucan acetyltransferase that catalyzes the acetylation of fucosylated Gal residues on xyloglucan side chains. Predominantly catalyze 6-O-monoacetylation of Gal residues in the Fuc-Gal-Xyl trisaccharide side chains of xyloglucan oligomers. The sequence is that of Xyloglucan O-acetyltransferase 2 from Populus trichocarpa (Western balsam poplar).